Consider the following 327-residue polypeptide: MKFSSLLFTASLVAAMPASIEPRQAQESINKLIKAKGKLYYGTITDPNLLQSQQNNAVIKADFGQVTPENSMKWDATEPQQGKFNFGGGDQVVNFAAQNGLKVRGHALVWHSQLPQWVHNIKDKTQMKNAIENHIKNVAGHFKGKVYAWDVLNEIFDWDGSLRKDSPFTQVLGEEFVGIAFRAARAADPNAKLYINDYSIDDPNAAKLKAGMVAHVKKWVSQGIPIDGIGSQTHLDPGAANGVQAALQQMASTGVKEVAITELDIRSAPAADYATVTKACLNVPKCVGITVWGVSDKDSWRKEKDSLLFNAQYQAKPAYTAVVNALR.

The N-terminal stretch at 1-15 (MKFSSLLFTASLVAA) is a signal peptide. Residues 43–325 (TITDPNLLQS…KPAYTAVVNA (283 aa)) enclose the GH10 domain. Glutamate 154 functions as the Proton donor in the catalytic mechanism. Glutamate 262 functions as the Nucleophile in the catalytic mechanism. A disulfide bridge connects residues cysteine 280 and cysteine 286.

The protein belongs to the glycosyl hydrolase 10 (cellulase F) family.

Its subcellular location is the secreted. It catalyses the reaction Endohydrolysis of (1-&gt;4)-beta-D-xylosidic linkages in xylans.. It functions in the pathway glycan degradation; xylan degradation. Weakly inhibited by the wheat xylanase inhibiting protein I (XIP-I). Its function is as follows. Endo-1,4-beta-xylanase involved in the hydrolysis of xylan, a major structural heterogeneous polysaccharide found in plant biomass representing the second most abundant polysaccharide in the biosphere, after cellulose. Plays an important role in causing fusarium head blight (FHB) on cereal crops. The protein is Endo-1,4-beta-xylanase C (XYLC) of Gibberella zeae (strain ATCC MYA-4620 / CBS 123657 / FGSC 9075 / NRRL 31084 / PH-1) (Wheat head blight fungus).